The chain runs to 899 residues: DNA mismatch repair protein MutS (899 aa).

Residues 1–20 (MGLQKKTDPEQAQADSAASR) form a disordered region. 631-638 (GPNMGGKS) lines the ATP pocket. Residues 832–852 (PPTPDDDEDDFGAAPSAVPAP) are disordered. Low complexity predominate over residues 843–852 (GAAPSAVPAP).

It belongs to the DNA mismatch repair MutS family.

In terms of biological role, this protein is involved in the repair of mismatches in DNA. It is possible that it carries out the mismatch recognition step. This protein has a weak ATPase activity. This is DNA mismatch repair protein MutS from Cupriavidus necator (strain ATCC 17699 / DSM 428 / KCTC 22496 / NCIMB 10442 / H16 / Stanier 337) (Ralstonia eutropha).